A 406-amino-acid chain; its full sequence is Renin (406 aa).

Residues 1 to 23 (MDGWRRMPRWGLLLLLWGSCTFG) form the signal peptide. The propeptide at 24–66 (LPTDTTTFKRIFLKRMPSIRESLKERGVDMARLGPEWSQPMKR) is activation peptide. Asn-71 is a glycosylation site (N-linked (GlcNAc...) asparagine). The region spanning 86–403 (YYGEIGIGTP…DRRNNRIGFA (318 aa)) is the Peptidase A1 domain. Asp-104 is a catalytic residue. An intrachain disulfide couples Cys-117 to Cys-124. The N-linked (GlcNAc...) asparagine glycan is linked to Asn-141. Cys-283 and Cys-287 are oxidised to a cystine. Asp-292 is a catalytic residue. Cys-325 and Cys-362 form a disulfide bridge.

This sequence belongs to the peptidase A1 family. Interacts with ATP6AP2.

It localises to the secreted. It is found in the membrane. It carries out the reaction Cleavage of Leu-|-Xaa bond in angiotensinogen to generate angiotensin I.. Interaction with ATP6AP2 results in a 5-fold increased efficiency in angiotensinogen processing. Renin is a highly specific endopeptidase, whose only known function is to generate angiotensin I from angiotensinogen in the plasma, initiating a cascade of reactions that produce an elevation of blood pressure and increased sodium retention by the kidney. In Homo sapiens (Human), this protein is Renin (REN).